Consider the following 1284-residue polypeptide: ABC multidrug transporter atrC (1284 aa).

Positions 1 to 11 (MKSTAESKETP) are enriched in basic and acidic residues. The segment at 1 to 24 (MKSTAESKETPSQDESTTSVPCTE) is disordered. 6 consecutive transmembrane segments (helical) span residues 55-75 (AVAI…NLIF), 99-119 (AAEL…LSYT), 178-198 (IGLL…RLWC), 203-223 (TLIC…VAAV), 282-302 (LLGL…GLAF), and 320-340 (IFTV…LAPY). Residues 55 to 346 (AVAILAACAS…LAPYSIEFSR (292 aa)) form the ABC transmembrane type-1 1 domain. One can recognise an ABC transporter 1 domain in the interval 381-626 (VELENVTFSY…DGVYAGLVKI (246 aa)). Residues Asn-385 and Asn-401 are each glycosylated (N-linked (GlcNAc...) asparagine). ATP is bound at residue 416 to 423 (GQSGSGKS). Asn-488 and Asn-632 each carry an N-linked (GlcNAc...) asparagine glycan. Helical transmembrane passes span 705–725 (LVVL…AILM) and 745–765 (FYAS…LAVG). Positions 705–992 (LVVLLGCLGG…LFQWSTSITK (288 aa)) constitute an ABC transmembrane type-1 2 domain. An N-linked (GlcNAc...) asparagine glycan is attached at Asn-800. The next 4 membrane-spanning stretches (helical) occupy residues 824-844 (IALV…AIAF), 846-866 (WKLG…AGMV), 931-951 (MICF…GFWY), and 955-975 (LVSL…SVFF). N-linked (GlcNAc...) asparagine glycosylation occurs at Asn-995. The region spanning 1027-1280 (IAMDNVRFSY…GGLYRRMCEA (254 aa)) is the ABC transporter 2 domain. 1062 to 1069 (GSSGCGKS) lines the ATP pocket. Residue Asn-1122 is glycosylated (N-linked (GlcNAc...) asparagine).

The protein belongs to the ABC transporter superfamily. ABCB family. Multidrug resistance exporter (TC 3.A.1.201) subfamily.

It localises to the cell membrane. Functionally, pleiotropic ABC efflux transporter involved in the protection of the cells against a wide range of toxic compounds. The polypeptide is ABC multidrug transporter atrC (Emericella nidulans (Aspergillus nidulans)).